Consider the following 299-residue polypeptide: Fructose-1,6-bisphosphatase class 1 (299 aa).

Residues Glu-79, Asp-98, Leu-100, and Asp-101 each coordinate Mg(2+). Residues 101–104 (DGSS), Tyr-207, and Lys-238 each bind substrate. Glu-244 contacts Mg(2+).

It belongs to the FBPase class 1 family. Homotetramer. It depends on Mg(2+) as a cofactor.

Its subcellular location is the cytoplasm. The enzyme catalyses beta-D-fructose 1,6-bisphosphate + H2O = beta-D-fructose 6-phosphate + phosphate. It functions in the pathway carbohydrate biosynthesis; gluconeogenesis. This chain is Fructose-1,6-bisphosphatase class 1, found in Campylobacter curvus (strain 525.92).